Here is a 169-residue protein sequence, read N- to C-terminus: NADH-quinone oxidoreductase subunit I (169 aa).

2 consecutive 4Fe-4S ferredoxin-type domains span residues 60 to 90 (LRRY…IEAE) and 100 to 129 (TRYD…EGPN). [4Fe-4S] cluster-binding residues include C70, C73, C76, C80, C109, C112, C115, and C119.

Belongs to the complex I 23 kDa subunit family. NDH-1 is composed of 14 different subunits. Subunits NuoA, H, J, K, L, M, N constitute the membrane sector of the complex. [4Fe-4S] cluster is required as a cofactor.

The protein resides in the cell membrane. The catalysed reaction is a quinone + NADH + 5 H(+)(in) = a quinol + NAD(+) + 4 H(+)(out). Its function is as follows. NDH-1 shuttles electrons from NADH, via FMN and iron-sulfur (Fe-S) centers, to quinones in the respiratory chain. The immediate electron acceptor for the enzyme in this species is believed to be ubiquinone. Couples the redox reaction to proton translocation (for every two electrons transferred, four hydrogen ions are translocated across the cytoplasmic membrane), and thus conserves the redox energy in a proton gradient. The protein is NADH-quinone oxidoreductase subunit I of Wolbachia pipientis wMel.